A 398-amino-acid chain; its full sequence is UPF0229 protein Ccel_0490 (398 aa).

Disordered stretches follow at residues 1 to 22 and 68 to 104; these read MAIF…RRRH and KSKP…NSEG. 2 stretches are compositionally biased toward basic and acidic residues: residues 11 to 22 and 78 to 95; these read GKDRSAEDRRRH and GNEK…EGKG.

It belongs to the UPF0229 family.

The sequence is that of UPF0229 protein Ccel_0490 from Ruminiclostridium cellulolyticum (strain ATCC 35319 / DSM 5812 / JCM 6584 / H10) (Clostridium cellulolyticum).